A 282-amino-acid chain; its full sequence is tRNA pseudouridine synthase A (282 aa).

Aspartate 61 serves as the catalytic Nucleophile. Tyrosine 119 lines the substrate pocket.

Belongs to the tRNA pseudouridine synthase TruA family. As to quaternary structure, homodimer.

It carries out the reaction uridine(38/39/40) in tRNA = pseudouridine(38/39/40) in tRNA. Formation of pseudouridine at positions 38, 39 and 40 in the anticodon stem and loop of transfer RNAs. This is tRNA pseudouridine synthase A from Nostoc sp. (strain PCC 7120 / SAG 25.82 / UTEX 2576).